The following is a 496-amino-acid chain: Lysine--tRNA ligase (496 aa).

Mg(2+)-binding residues include Glu-409 and Glu-416.

This sequence belongs to the class-II aminoacyl-tRNA synthetase family. In terms of assembly, homodimer. It depends on Mg(2+) as a cofactor.

The protein localises to the cytoplasm. The catalysed reaction is tRNA(Lys) + L-lysine + ATP = L-lysyl-tRNA(Lys) + AMP + diphosphate. The chain is Lysine--tRNA ligase from Streptococcus pneumoniae serotype 19F (strain G54).